The following is a 1760-amino-acid chain: Cilia- and flagella-associated protein 44 (1760 aa).

WD repeat units lie at residues 119 to 160 (GATK…MVLR), 163 to 202 (CHNT…TGLK), 213 to 251 (LEIS…CCFA), 276 to 315 (CHEG…VAEG), and 388 to 427 (FNGG…ELYK). Residues 1155 to 1165 (RQEEKLREQTA) are compositionally biased toward basic and acidic residues. The segment at 1155 to 1224 (RQEEKLREQT…FGTAAARTRS (70 aa)) is disordered. A compositionally biased stretch (polar residues) spans 1181–1190 (PATNTDTSGA). The span at 1194–1205 (ATRRSEGEDSRK) shows a compositional bias: basic and acidic residues. Residues 1348–1389 (YDEARNSRDRCLREMEELQRLVQDQTASIEKLQEANKVFRRE) are a coiled coil. Positions 1420–1444 (HSDMSGNDDDITSDDDDDDDMGEDE) are disordered. The segment covering 1425–1444 (GNDDDITSDDDDDDDMGEDE) has biased composition (acidic residues).

The protein belongs to the CFAP44 family.

The protein resides in the cell projection. It localises to the cilium. Its subcellular location is the flagellum. It is found in the cytoplasm. The protein localises to the cytoskeleton. The protein resides in the flagellum axoneme. Its function is as follows. Flagellar protein involved in flagellum axoneme organization and function. This Trypanosoma brucei brucei (strain 927/4 GUTat10.1) protein is Cilia- and flagella-associated protein 44.